The following is a 564-amino-acid chain: Proline--tRNA ligase 1 (564 aa).

This sequence belongs to the class-II aminoacyl-tRNA synthetase family. ProS type 1 subfamily. As to quaternary structure, homodimer.

It is found in the cytoplasm. It catalyses the reaction tRNA(Pro) + L-proline + ATP = L-prolyl-tRNA(Pro) + AMP + diphosphate. Catalyzes the attachment of proline to tRNA(Pro) in a two-step reaction: proline is first activated by ATP to form Pro-AMP and then transferred to the acceptor end of tRNA(Pro). As ProRS can inadvertently accommodate and process non-cognate amino acids such as alanine and cysteine, to avoid such errors it has two additional distinct editing activities against alanine. One activity is designated as 'pretransfer' editing and involves the tRNA(Pro)-independent hydrolysis of activated Ala-AMP. The other activity is designated 'posttransfer' editing and involves deacylation of mischarged Ala-tRNA(Pro). The misacylated Cys-tRNA(Pro) is not edited by ProRS. In Streptomyces avermitilis (strain ATCC 31267 / DSM 46492 / JCM 5070 / NBRC 14893 / NCIMB 12804 / NRRL 8165 / MA-4680), this protein is Proline--tRNA ligase 1.